The following is a 246-amino-acid chain: Metallo-beta-lactamase IMP-1 (246 aa).

Positions 1–18 (MSKLSVFFIFLFCSIATA) are cleaved as a signal peptide. Positions 95, 97, 99, 157, and 176 each coordinate Zn(2+). A beta-lactam is bound by residues K179 and N185. H215 is a Zn(2+) binding site.

The protein belongs to the metallo-beta-lactamase superfamily. Class-B beta-lactamase family. Monomer. Requires Zn(2+) as cofactor.

The protein resides in the periplasm. The enzyme catalyses a beta-lactam + H2O = a substituted beta-amino acid. Its activity is regulated as follows. Inhibited by captopril stereoisomers, Hg(2+), Fe(2+), Cu(2+), chelating agents such as EDTA, dansyl derivatives, including dansyl-C4SH, bisthiazolidines, mercaptoacetic acid and by PMPC phosphonates. Inhibited by 3-(3-mercaptopropionylsulfanyl)-propionic acid pentafluorophenyl ester, via a covalent binding to Lys-179. Not susceptible to inactivation by the beta-lactamase-blocking agents clavulanic acid or cloxacillin. Class B beta-lactamase which confers resistance to the beta-lactam antibiotics, including penicillins, cephalosporins and carbapenems. Acts via hydrolysis of the beta-lactam ring. Has penicillin-, cephalosporin- and carbapenem-hydrolyzing activities. Has endoribonuclease activity, cleaving substrate RNAs preferentially between U/C and A, in vitro. The chain is Metallo-beta-lactamase IMP-1 from Serratia marcescens.